The sequence spans 354 residues: UDP-3-O-acylglucosamine N-acyltransferase (354 aa).

The Proton acceptor role is filled by His245.

This sequence belongs to the transferase hexapeptide repeat family. LpxD subfamily. In terms of assembly, homotrimer.

It carries out the reaction a UDP-3-O-[(3R)-3-hydroxyacyl]-alpha-D-glucosamine + a (3R)-hydroxyacyl-[ACP] = a UDP-2-N,3-O-bis[(3R)-3-hydroxyacyl]-alpha-D-glucosamine + holo-[ACP] + H(+). Its pathway is bacterial outer membrane biogenesis; LPS lipid A biosynthesis. In terms of biological role, catalyzes the N-acylation of UDP-3-O-acylglucosamine using 3-hydroxyacyl-ACP as the acyl donor. Is involved in the biosynthesis of lipid A, a phosphorylated glycolipid that anchors the lipopolysaccharide to the outer membrane of the cell. The chain is UDP-3-O-acylglucosamine N-acyltransferase from Anaeromyxobacter sp. (strain K).